We begin with the raw amino-acid sequence, 439 residues long: Hemagglutinin-esterase (439 aa).

The N-terminal stretch at 1-22 is a signal peptide; the sequence is MGCMCIAMAPRTLLLLIGCQLV. Residues 12–132 form an esterase domain 1 region; it reads TLLLLIGCQL…DNKRWMGNKA (121 aa). Residues 23–407 are Virion surface-facing; the sequence is FGFNEPLNIV…PVCIYDPLPV (385 aa). S45 serves as the catalytic Nucleophile. C49 and C70 form a disulfide bridge. Residues N94, N152, N196, N246, N309, and N316 are each glycosylated (N-linked (GlcNAc...) asparagine; by host). C118 and C167 are joined by a disulfide. A receptor binding region spans residues 133-281; the sequence is RFYARVYEKM…GNYKAVSLEY (149 aa). 2 disulfides stabilise this stretch: C202–C291 and C210–C264. The interval 282 to 395 is esterase domain 2; that stretch reads LLSLPSKAIC…HCPTAANIGY (114 aa). The cysteines at positions 322 and 327 are disulfide-linked. N-linked (GlcNAc...) asparagine; by host glycosylation is present at N331. Catalysis depends on charge relay system residues D342 and H345. N-linked (GlcNAc...) asparagine; by host glycosylation is found at N360 and N374. The cysteines at positions 363 and 387 are disulfide-linked. Residues 408-428 traverse the membrane as a helical segment; the sequence is ILLGVLLGIAVLIIVFLMFYF. The Intravirion portion of the chain corresponds to 429–439; that stretch reads MTDSGVRLHEA.

Belongs to the influenza type C/coronaviruses hemagglutinin-esterase family. In terms of assembly, homodimer; disulfide-linked. Forms a complex with the M protein in the pre-Golgi. Associates then with S-M complex to form a ternary complex S-M-HE. In terms of processing, N-glycosylated in the host RER.

The protein localises to the virion membrane. Its subcellular location is the host cell membrane. It catalyses the reaction N-acetyl-9-O-acetylneuraminate + H2O = N-acetylneuraminate + acetate + H(+). It carries out the reaction N-acetyl-4-O-acetylneuraminate + H2O = N-acetylneuraminate + acetate + H(+). In terms of biological role, structural protein that makes short spikes at the surface of the virus. Contains receptor binding and receptor-destroying activities. Mediates de-O-acetylation of N-acetyl-4-O-acetylneuraminic acid, which is probably the receptor determinant recognized by the virus on the surface of erythrocytes and susceptible cells. This receptor-destroying activity is important for virus release as it probably helps preventing self-aggregation and ensures the efficient spread of the progeny virus from cell to cell. May serve as a secondary viral attachment protein for initiating infection, the spike protein being the major one. May become a target for both the humoral and the cellular branches of the immune system. This is Hemagglutinin-esterase from Murine coronavirus (strain S) (MHV-S).